We begin with the raw amino-acid sequence, 325 residues long: MKIFDYEDIQLIPNKCIVESRSECDTTIQFGPKKFKLPVVPANMQTVMNEKLAKWFAENDYFYIMHRFDEEARIPFIKHMQNSGLFASISVGVKKAEFDFIEKLAQEKLIPEYITIDIAHGHSDSVINMIKHIKNHIPDSFVIAGNVGTPEGVRELENAGADATKVGIGPGRVCITKIKTGFGTGGWQLAALNICSKAARKPLIADGGIRTHGDIAKSIRFGASMVMIGSLFAAHEESPGETVELDGKQYKEYFGSASEFQKGEHKNVEGKKMFVEHKGSLMDTLKEMQQDLQSSISYAGGKDLKSLRTVDYVIVRNSIFNGDRD.

C174 functions as the Thioimidate intermediate in the catalytic mechanism. NADP(+) is bound at residue 203–226 (LIADGGIRTHGDIAKSIRFGASMV).

Belongs to the IMPDH/GMPR family. GuaC type 2 subfamily.

The enzyme catalyses IMP + NH4(+) + NADP(+) = GMP + NADPH + 2 H(+). Catalyzes the irreversible NADPH-dependent deamination of GMP to IMP. It functions in the conversion of nucleobase, nucleoside and nucleotide derivatives of G to A nucleotides, and in maintaining the intracellular balance of A and G nucleotides. In Staphylococcus aureus (strain JH9), this protein is GMP reductase.